The chain runs to 153 residues: Heavy metal-associated isoprenylated plant protein 26 (153 aa).

In terms of domain architecture, HMA spans 25-89; the sequence is LQTVEIKVKM…MSHRTGKKVE (65 aa). A metal cation is bound by residues Cys-36 and Cys-39. Residue Cys-150 is modified to Cysteine methyl ester. The S-farnesyl cysteine moiety is linked to residue Cys-150. Positions 151–153 are cleaved as a propeptide — removed in mature form; the sequence is VVM.

Belongs to the HIPP family. As to quaternary structure, interacts with ZHD11/HB29 and ACBP2 (via ankyrin repeats). May also interact with HB21. As to expression, expressed in roots, stems and flowers. Lower expression in siliques and leaves. Expressed in the vascular tissues. Detected in lateral roots, shoot apical meristem, petals of unopened flowers and weak expression in leaf vasculature.

It is found in the nucleus membrane. The protein resides in the cell membrane. In terms of biological role, heavy-metal-binding protein. Binds lead, cadmium and copper. May be involved in heavy-metal transport. May be involved in cadmium transport and play a role in cadmium detoxification. The protein is Heavy metal-associated isoprenylated plant protein 26 of Arabidopsis thaliana (Mouse-ear cress).